The primary structure comprises 178 residues: DELTA-miturgitoxin-Cp3a (178 aa).

The signal sequence occupies residues 1-18 (MKALYLLGLLAFLYSCSS). The propeptide occupies 19-46 (ENVYDLQPESSEEENPGTFLEAIQEQSR). The short motif at 43–46 (EQSR) is the Processing quadruplet motif element. 8 cysteine pairs are disulfide-bonded: C48-C63, C55-C72, C62-C86, C74-C84, C113-C128, C120-C137, C127-C155, and C139-C153.

Belongs to the spider toxin CSTX family. Double-CSTX subfamily. Cleavage of the propeptide depends on the processing quadruplet motif (XXXR, with at least one of X being E). As to expression, expressed by the venom gland.

The protein localises to the secreted. In terms of biological role, spider venom toxin that exhibits cytolytic activity by forming an alpha-helix across the membrane. Lethal to insect larvae. In Cheiracanthium punctorium (Yellow sac spider), this protein is DELTA-miturgitoxin-Cp3a.